The primary structure comprises 99 residues: Meromycolate extension acyl carrier protein (99 aa).

The 79-residue stretch at 3 to 81 (ATQEEIIAGL…DVVAYIQKLE (79 aa)) folds into the Carrier domain. The residue at position 41 (serine 41) is an O-(pantetheine 4'-phosphoryl)serine. An Isoglutamyl lysine isopeptide (Lys-Gln) (interchain with Q-Cter in protein Pup) cross-link involves residue lysine 79.

The protein belongs to the acyl carrier protein (ACP) family. Post-translationally, 4'-phosphopantetheine is transferred from CoA to a specific serine of apo-AcpM.

The protein resides in the cytoplasm. Functionally, acyl carrier protein involved in meromycolate extension. In Mycolicibacterium smegmatis (strain ATCC 700084 / mc(2)155) (Mycobacterium smegmatis), this protein is Meromycolate extension acyl carrier protein (acpM).